A 572-amino-acid chain; its full sequence is Probable transporter MCH1 (572 aa).

A compositionally biased stretch (polar residues) spans 1–29; that stretch reads MSSSAPDDTQASRLDADQISTRSSSYASD. The disordered stretch occupies residues 1-39; the sequence is MSSSAPDDTQASRLDADQISTRSSSYASDNDTDSTETRI. An N-linked (GlcNAc...) asparagine glycan is attached at Asn-30. The next 10 helical transmembrane spans lie at 50-70, 89-109, 116-136, 159-179, 193-213, 232-252, 335-355, 426-446, 459-479, and 488-508; these read LLAF…VVFS, AVAI…GYIC, PLAL…AGVY, FLML…MAAV, GLAL…LSQA, VFRF…LGTF, LAFL…GTII, FMAF…SGLV, LVGA…TIIW, and YGLI…VYSA. Residue Asn-515 is glycosylated (N-linked (GlcNAc...) asparagine). A helical transmembrane segment spans residues 539–559; the sequence is PTYWAETITVWIAVGLLLWAW.

Belongs to the major facilitator superfamily.

It is found in the vacuole membrane. Probable transporter. In Gibberella zeae (strain ATCC MYA-4620 / CBS 123657 / FGSC 9075 / NRRL 31084 / PH-1) (Wheat head blight fungus), this protein is Probable transporter MCH1 (MCH1).